The following is a 333-amino-acid chain: Testin-2 (333 aa).

Positions 1–17 (MIAVLFLAILCLEVDST) are cleaved as a signal peptide. 3 disulfide bridges follow: C135-C178, C169-C211, and C269-C322. N173 carries an N-linked (GlcNAc...) asparagine glycan. Catalysis depends on residues H276 and N300.

Belongs to the peptidase C1 family. As to expression, sertoli cells.

It is found in the secreted. The protein is Testin-2 (Testin) of Rattus norvegicus (Rat).